The chain runs to 662 residues: Chromosomal replication initiator protein DnaA (662 aa).

A domain I, interacts with DnaA modulators region spans residues 1 to 93 (MDDEQNVLAT…QVEGLGVRIA (93 aa)). Residues 93–322 (AAPATPTAER…STPAPANSSA (230 aa)) are domain II. The span at 96–105 (ATPTAERAAA) shows a compositional bias: low complexity. The segment at 96–294 (ATPTAERAAA…SDGPVERDDE (199 aa)) is disordered. The segment covering 114-123 (SRPERPRGER) has biased composition (basic and acidic residues). Residues 166-199 (PPAAEYTPAAEYTPAAEYTPAAEYSPEPEYTPAT) show a composition bias toward low complexity. 2 stretches are compositionally biased toward basic and acidic residues: residues 236 to 248 (TPRR…RRDA) and 261 to 290 (PGDR…GPVE). The tract at residues 323–539 (SLNAKYTFET…GALIRVTAFA (217 aa)) is domain III, AAA+ region. Residues glycine 367, glycine 369, lysine 370, and threonine 371 each coordinate ATP. The tract at residues 540-662 (SLNGQPLDLS…LTARIKQRSR (123 aa)) is domain IV, binds dsDNA.

Belongs to the DnaA family. In terms of assembly, oligomerizes as a right-handed, spiral filament on DNA at oriC.

It is found in the cytoplasm. Functionally, plays an essential role in the initiation and regulation of chromosomal replication. ATP-DnaA binds to the origin of replication (oriC) to initiate formation of the DNA replication initiation complex once per cell cycle. Binds the DnaA box (a 9 base pair repeat at the origin) and separates the double-stranded (ds)DNA. Forms a right-handed helical filament on oriC DNA; dsDNA binds to the exterior of the filament while single-stranded (ss)DNA is stabiized in the filament's interior. The ATP-DnaA-oriC complex binds and stabilizes one strand of the AT-rich DNA unwinding element (DUE), permitting loading of DNA polymerase. After initiation quickly degrades to an ADP-DnaA complex that is not apt for DNA replication. Binds acidic phospholipids. The chain is Chromosomal replication initiator protein DnaA from Nocardia farcinica (strain IFM 10152).